We begin with the raw amino-acid sequence, 430 residues long: MKTELSQKLFEKANDLFPGGVNSPVRAFKGVGGTPRFISRAKGSHIFDVDGNDYVDYVLSWGPMIVGHCHPEVMREVQDAMKEGSSFGAPSPREILLAELVRERMPWVEKMRFVSSGTEATTSAIRVARGFTGRDDIVKFDGCYHGAGDPLLVKAGSGVETLGLPDSPGVPADVARHTLTAPYNDLPALEQVFQAKGASIAAVILEPVVGNMGVLVPRPGFLQGVHDLCRKHGALFIVDEVMTGFRLSSGGACGLYGLRPDLVTFGKVIGAGLPVGAFGGRRDVMDRVAPAGPIYQAGTLSGNPMAMAAGHAALKLMTEAAYRKLEALSAALAEGLQAAAAEAKVPVQVNRVGSMLTVFFSDRPVFDAASARACNTRRFGAFFHAMLEHGAYLPPSQFEAAFLSTAHTDDDVARTVAAARLAFAEAAKVA.

K267 carries the N6-(pyridoxal phosphate)lysine modification.

This sequence belongs to the class-III pyridoxal-phosphate-dependent aminotransferase family. HemL subfamily. In terms of assembly, homodimer. Pyridoxal 5'-phosphate serves as cofactor.

Its subcellular location is the cytoplasm. It catalyses the reaction (S)-4-amino-5-oxopentanoate = 5-aminolevulinate. Its pathway is porphyrin-containing compound metabolism; protoporphyrin-IX biosynthesis; 5-aminolevulinate from L-glutamyl-tRNA(Glu): step 2/2. The protein is Glutamate-1-semialdehyde 2,1-aminomutase of Anaeromyxobacter sp. (strain K).